The chain runs to 556 residues: Formate--tetrahydrofolate ligase (556 aa).

65–72 (TPAGEGKS) is a binding site for ATP.

This sequence belongs to the formate--tetrahydrofolate ligase family.

It carries out the reaction (6S)-5,6,7,8-tetrahydrofolate + formate + ATP = (6R)-10-formyltetrahydrofolate + ADP + phosphate. The protein operates within one-carbon metabolism; tetrahydrofolate interconversion. The protein is Formate--tetrahydrofolate ligase of Streptococcus pneumoniae (strain ATCC 700669 / Spain 23F-1).